Consider the following 460-residue polypeptide: Interleukin-6 receptor subunit alpha (460 aa).

The first 19 residues, 1–19 (MLTVGCTLLVALLAAPAVA), serve as a signal peptide directing secretion. In terms of domain architecture, Ig-like C2-type spans 20 to 116 (LVLGSCRALE…DVPPEEPKLS (97 aa)). Topologically, residues 20–364 (LVLGSCRALE…VQESSSMSLP (345 aa)) are extracellular. Cystine bridges form between C25-C190, C47-C92, C117-C128, and C162-C173. N-linked (GlcNAc...) asparagine glycosylation is found at N32 and N55. 2 consecutive Fibronectin type-III domains span residues 109-214 (PPEE…VQPD) and 215-313 (PPAN…TPWI). N150 is a glycosylation site (N-linked (GlcNAc...) asparagine). N218 is a glycosylation site (N-linked (GlcNAc...) asparagine). Residues 300-304 (WSEWS) carry the WSXWS motif motif. The chain crosses the membrane as a helical span at residues 365 to 385 (TFLVAGGSLAFGLLLCVFIIL). The Cytoplasmic portion of the chain corresponds to 386–460 (RLKQKWKSEA…NSNRDYLFPR (75 aa)).

This sequence belongs to the type I cytokine receptor family. Type 3 subfamily. Component of a hexamer of two molecules each of IL6, IL6R and IL6ST; first binds to IL6 to associate with the signaling subunit IL6ST. Interacts (via N-terminal ectodomain) with SORL1; this interaction may affect IL6-binding to IL6R, hence decrease IL6 'classic-signaling'. As to quaternary structure, also interacts with SORL1; this interaction leads to soluble IL6R internalization. May form a trimeric complex with the soluble SORL1 ectodomain and circulating IL6 receptor; this interaction might stabilize circulating IL6, hence promote IL6 'trans-signaling'. In terms of processing, a short soluble form is also released from the membrane by proteolysis. The sIL6R is formed by limited proteolysis of membrane-bound receptors, a process referred to as ectodomain shedding. mIL6R is cleaved by the proteases ADAM10 and ADAM17. Glycosylated. Glycosylation is dispensable for transport, signaling, and cell-surface turnover. Glycosylation at Asn-55 is a protease-regulatory exosite. Glycosylation is required for ADAM17-mediated proteolysis. As to expression, expressed by dendritic cells. Detected in the cerebrospinal fluid.

It is found in the cell membrane. The protein localises to the secreted. Its activity is regulated as follows. Classic and trans-signaling are both inhibited by tocilizumab, a humanized monoclonal antibody that blocks interleukin IL6R signaling. Its function is as follows. Part of the receptor for interleukin 6. Binds to IL6 with low affinity, but does not transduce a signal. Signal activation necessitate an association with IL6ST. Activation leads to the regulation of the immune response, acute-phase reactions and hematopoiesis. The interaction with membrane-bound IL6R and IL6ST stimulates 'classic signaling', the restricted expression of the IL6R limits classic IL6 signaling to only a few tissues such as the liver and some cells of the immune system. Whereas the binding of IL6 and soluble IL6R to IL6ST stimulates 'trans-signaling'. Alternatively, 'cluster signaling' occurs when membrane-bound IL6:IL6R complexes on transmitter cells activate IL6ST receptors on neighboring receiver cells. In terms of biological role, signaling via the membrane-bound IL6R is mostly regenerative and anti-inflammatory. Drives naive CD4(+) T cells to the Th17 lineage, through 'cluster signaling' by dendritic cells. Functionally, soluble form of IL6 receptor (sIL6R) that acts as an agonist of IL6 activity. The IL6:sIL6R complex (hyper-IL6) binds to IL6ST/gp130 on cell surfaces and induces signaling also on cells that do not express membrane-bound IL6R in a process called IL6 'trans-signaling'. sIL6R is causative for the pro-inflammatory properties of IL6 and an important player in the development of chronic inflammatory diseases. In complex with IL6, is required for induction of VEGF production. Plays a protective role during liver injury, being required for maintenance of tissue regeneration. 'Trans-signaling' in central nervous system regulates energy and glucose homeostasis. This chain is Interleukin-6 receptor subunit alpha, found in Mus musculus (Mouse).